The sequence spans 245 residues: 5-oxoprolinase subunit A (245 aa).

Belongs to the LamB/PxpA family. As to quaternary structure, forms a complex composed of PxpA, PxpB and PxpC.

The enzyme catalyses 5-oxo-L-proline + ATP + 2 H2O = L-glutamate + ADP + phosphate + H(+). Catalyzes the cleavage of 5-oxoproline to form L-glutamate coupled to the hydrolysis of ATP to ADP and inorganic phosphate. The chain is 5-oxoprolinase subunit A from Erwinia tasmaniensis (strain DSM 17950 / CFBP 7177 / CIP 109463 / NCPPB 4357 / Et1/99).